The following is a 57-amino-acid chain: Large ribosomal subunit protein uL30 (57 aa).

This sequence belongs to the universal ribosomal protein uL30 family. As to quaternary structure, part of the 50S ribosomal subunit.

In Buchnera aphidicola subsp. Cinara cedri (strain Cc), this protein is Large ribosomal subunit protein uL30.